The primary structure comprises 338 residues: Lipoate-protein ligase A (338 aa).

Residues Pro29–Val216 enclose the BPL/LPL catalytic domain. ATP is bound by residues Arg71, Gly76–Phe79, and Lys134. Lys134 contributes to the (R)-lipoate binding site.

This sequence belongs to the LplA family. In terms of assembly, monomer.

The protein resides in the cytoplasm. It catalyses the reaction L-lysyl-[lipoyl-carrier protein] + (R)-lipoate + ATP = N(6)-[(R)-lipoyl]-L-lysyl-[lipoyl-carrier protein] + AMP + diphosphate + H(+). It functions in the pathway protein modification; protein lipoylation via exogenous pathway; protein N(6)-(lipoyl)lysine from lipoate: step 1/2. Its pathway is protein modification; protein lipoylation via exogenous pathway; protein N(6)-(lipoyl)lysine from lipoate: step 2/2. Functionally, catalyzes both the ATP-dependent activation of exogenously supplied lipoate to lipoyl-AMP and the transfer of the activated lipoyl onto the lipoyl domains of lipoate-dependent enzymes. In Salmonella schwarzengrund (strain CVM19633), this protein is Lipoate-protein ligase A.